A 307-amino-acid chain; its full sequence is Bifunctional protein FolD 3 (307 aa).

NADP(+)-binding positions include 169 to 171, Ser194, and Ile235; that span reads GRS.

Belongs to the tetrahydrofolate dehydrogenase/cyclohydrolase family. In terms of assembly, homodimer.

The catalysed reaction is (6R)-5,10-methylene-5,6,7,8-tetrahydrofolate + NADP(+) = (6R)-5,10-methenyltetrahydrofolate + NADPH. It carries out the reaction (6R)-5,10-methenyltetrahydrofolate + H2O = (6R)-10-formyltetrahydrofolate + H(+). Its pathway is one-carbon metabolism; tetrahydrofolate interconversion. In terms of biological role, catalyzes the oxidation of 5,10-methylenetetrahydrofolate to 5,10-methenyltetrahydrofolate and then the hydrolysis of 5,10-methenyltetrahydrofolate to 10-formyltetrahydrofolate. The sequence is that of Bifunctional protein FolD 3 from Ectopseudomonas mendocina (strain ymp) (Pseudomonas mendocina).